Consider the following 295-residue polypeptide: MAITAQMVKELREKTGAGMMDCKKALTETNGDMEKAIDFLREKGIAKAAKKADRIAAEGLTFIETNGNEGLILELNSETDFVAKNEGFQALIKELAAHLLANKPANVEEAMAQTIEGGKTVEEHINEAIAKIGEKLTLRRFEIVSKTDADAFGAYLHMGGRIGVLTVLEGSTDEAAAKDVAMHIAAVNPKYIDRDAVTAEEVEHERQVLTQQALNEGKPEKIVAKMVEGRLGKFFEEICLLDQTFVKNPDMKVRQFVESKGGTLKGFVRYAVGEGIEKREDNFAEEVMNQVKGNN.

An involved in Mg(2+) ion dislocation from EF-Tu region spans residues 79–82; the sequence is TDFV.

It belongs to the EF-Ts family.

The protein resides in the cytoplasm. Associates with the EF-Tu.GDP complex and induces the exchange of GDP to GTP. It remains bound to the aminoacyl-tRNA.EF-Tu.GTP complex up to the GTP hydrolysis stage on the ribosome. The chain is Elongation factor Ts from Bacillus mycoides (strain KBAB4) (Bacillus weihenstephanensis).